Here is a 474-residue protein sequence, read N- to C-terminus: tRNA-2-methylthio-N(6)-dimethylallyladenosine synthase (474 aa).

The region spanning K3–S120 is the MTTase N-terminal domain. The [4Fe-4S] cluster site is built by C12, C49, C83, C157, C161, and C164. Residues R143–R375 enclose the Radical SAM core domain. Residues R378 to R441 form the TRAM domain.

Belongs to the methylthiotransferase family. MiaB subfamily. As to quaternary structure, monomer. [4Fe-4S] cluster is required as a cofactor.

It localises to the cytoplasm. The enzyme catalyses N(6)-dimethylallyladenosine(37) in tRNA + (sulfur carrier)-SH + AH2 + 2 S-adenosyl-L-methionine = 2-methylsulfanyl-N(6)-dimethylallyladenosine(37) in tRNA + (sulfur carrier)-H + 5'-deoxyadenosine + L-methionine + A + S-adenosyl-L-homocysteine + 2 H(+). Functionally, catalyzes the methylthiolation of N6-(dimethylallyl)adenosine (i(6)A), leading to the formation of 2-methylthio-N6-(dimethylallyl)adenosine (ms(2)i(6)A) at position 37 in tRNAs that read codons beginning with uridine. This Photobacterium profundum (strain SS9) protein is tRNA-2-methylthio-N(6)-dimethylallyladenosine synthase.